Here is a 260-residue protein sequence, read N- to C-terminus: NAD kinase (260 aa).

Asp49 (proton acceptor) is an active-site residue. Residues 49–50, 119–120, Asp149, Ala157, and 160–165 each bind NAD(+); these read DG, NE, and TAYNLS.

Belongs to the NAD kinase family. Requires a divalent metal cation as cofactor.

It localises to the cytoplasm. The enzyme catalyses NAD(+) + ATP = ADP + NADP(+) + H(+). In terms of biological role, involved in the regulation of the intracellular balance of NAD and NADP, and is a key enzyme in the biosynthesis of NADP. Catalyzes specifically the phosphorylation on 2'-hydroxyl of the adenosine moiety of NAD to yield NADP. The protein is NAD kinase of Caulobacter vibrioides (strain ATCC 19089 / CIP 103742 / CB 15) (Caulobacter crescentus).